Consider the following 102-residue polypeptide: Protein C4 (102 aa).

Residues 1–27 (MRMGSLISTCLSSSKASSSARINDSST) are compositionally biased toward low complexity. Disordered stretches follow at residues 1 to 35 (MRMG…PGQH) and 47 to 86 (RQTS…LTPR).

This sequence belongs to the geminiviridae protein AC4/C4 family.

Functionally, pathogenicity determinant. May act as a suppressor of RNA-mediated gene silencing, also known as post-transcriptional gene silencing (PTGS), a mechanism of plant viral defense that limits the accumulation of viral RNAs. The protein is Protein C4 of Cynanchum acutum (Little mallow).